A 366-amino-acid polypeptide reads, in one-letter code: Ribosomal RNA large subunit methyltransferase M (366 aa).

S-adenosyl-L-methionine is bound by residues Ser188, 221 to 224 (CPGG), Asp240, Asp260, and Asp277. The Proton acceptor role is filled by Lys306.

Belongs to the class I-like SAM-binding methyltransferase superfamily. RNA methyltransferase RlmE family. RlmM subfamily. As to quaternary structure, monomer.

The protein localises to the cytoplasm. It carries out the reaction cytidine(2498) in 23S rRNA + S-adenosyl-L-methionine = 2'-O-methylcytidine(2498) in 23S rRNA + S-adenosyl-L-homocysteine + H(+). Catalyzes the 2'-O-methylation at nucleotide C2498 in 23S rRNA. The chain is Ribosomal RNA large subunit methyltransferase M from Photorhabdus laumondii subsp. laumondii (strain DSM 15139 / CIP 105565 / TT01) (Photorhabdus luminescens subsp. laumondii).